A 97-amino-acid polypeptide reads, in one-letter code: uncharacterized protein (97 aa).

This is an uncharacterized protein from Salmonella choleraesuis (strain SC-B67).